The sequence spans 390 residues: Methionyl-tRNA formyltransferase, mitochondrial (390 aa).

The N-terminal 33 residues, 1 to 33, are a transit peptide targeting the mitochondrion; that stretch reads MRVLLRCCCGHLPVGGGAGRRSNPRWRALARLS.

The protein belongs to the Fmt family.

It localises to the mitochondrion. The enzyme catalyses L-methionyl-tRNA(fMet) + (6R)-10-formyltetrahydrofolate = N-formyl-L-methionyl-tRNA(fMet) + (6S)-5,6,7,8-tetrahydrofolate + H(+). Functionally, methionyl-tRNA formyltransferase that formylates methionyl-tRNA in mitochondria and is crucial for translation initiation. The polypeptide is Methionyl-tRNA formyltransferase, mitochondrial (MTFMT) (Bos taurus (Bovine)).